Consider the following 55-residue polypeptide: ATP synthase F(0) complex subunit 8 (55 aa).

The chain crosses the membrane as a helical span at residues Trp-9 to Leu-29.

The protein belongs to the ATPase protein 8 family. As to quaternary structure, component of the ATP synthase complex composed at least of ATP5F1A/subunit alpha, ATP5F1B/subunit beta, ATP5MC1/subunit c (homooctomer), MT-ATP6/subunit a, MT-ATP8/subunit 8, ATP5ME/subunit e, ATP5MF/subunit f, ATP5MG/subunit g, ATP5MK/subunit k, ATP5MJ/subunit j, ATP5F1C/subunit gamma, ATP5F1D/subunit delta, ATP5F1E/subunit epsilon, ATP5PF/subunit F6, ATP5PB/subunit b, ATP5PD/subunit d, ATP5PO/subunit OSCP. ATP synthase complex consists of a soluble F(1) head domain (subunits alpha(3) and beta(3)) - the catalytic core - and a membrane F(0) domain - the membrane proton channel (subunits c, a, 8, e, f, g, k and j). These two domains are linked by a central stalk (subunits gamma, delta, and epsilon) rotating inside the F1 region and a stationary peripheral stalk (subunits F6, b, d, and OSCP).

It is found in the mitochondrion membrane. In terms of biological role, subunit 8, of the mitochondrial membrane ATP synthase complex (F(1)F(0) ATP synthase or Complex V) that produces ATP from ADP in the presence of a proton gradient across the membrane which is generated by electron transport complexes of the respiratory chain. ATP synthase complex consist of a soluble F(1) head domain - the catalytic core - and a membrane F(1) domain - the membrane proton channel. These two domains are linked by a central stalk rotating inside the F(1) region and a stationary peripheral stalk. During catalysis, ATP synthesis in the catalytic domain of F(1) is coupled via a rotary mechanism of the central stalk subunits to proton translocation. In vivo, can only synthesize ATP although its ATP hydrolase activity can be activated artificially in vitro. Part of the complex F(0) domain. The protein is ATP synthase F(0) complex subunit 8 of Rhea americana (Greater rhea).